A 728-amino-acid polypeptide reads, in one-letter code: Fibulin-1 (728 aa).

A signal peptide spans 1–17 (MRICFLLLAFLVAETFA). Cystine bridges form between C23–C49, C24–C56, C37–C57, C66–C94, C79–C95, C97–C121, C98–C128, C111–C129, C159–C168, C164–C178, C180–C279, C285–C298, C292–C307, C347–C359, C353–C368, C375–C388, C394–C404, C399–C413, C415–C428, C434–C448, C442–C457, C459–C472, C478–C489, C485–C498, C500–C513, C519–C534, C530–C543, C545–C558, C564–C576, and C569–C585. Anaphylatoxin-like domains follow at residues 23–64 (CCAG…LLDN), 65–96 (ACDSGTDIAKEEESCPSNINILGGGLKKECCD), and 97–129 (CCLLAKDLLNRNEPCVAPVGFSAGCLRSFNKCC). An EGF-like 1 domain is found at 155–194 (LGDRCASSHCEHLCHDRGGEKVECSCRSGFDLAPDGMACV). An EGF-like 2; calcium-binding domain is found at 195-280 (DRNECLTRQS…GWLFQHGHCV (86 aa)). Residues 281 to 344 (DVDECNLGSH…YPKNGMCNDI (64 aa)) form the EGF-like 3; calcium-binding domain. The 47-residue stretch at 343-389 (DIDECVTGHNCGAGEECVNTPGSFRCQQKGNLCAHGYEVNGATGFCE) folds into the EGF-like 4; calcium-binding domain. The 40-residue stretch at 390–429 (DVNECQQGVCGSMECINLPGTYKCKCGPGYEFNDAKKRCE) folds into the EGF-like 5; calcium-binding domain. Positions 430–473 (DVDECIKFAGHVCDLSAECINTIGSFECKCKPGFQLASDGRRCE) constitute an EGF-like 6; calcium-binding domain. The EGF-like 7; calcium-binding domain occupies 474–514 (DVNECTTGIAACEQKCVNIPGSYQCICDRGFALGPDGTKCE). The EGF-like 8; calcium-binding domain maps to 515–559 (DIDECSIWAGSGNDLCMGGCINTKGSYLCQCPPGYKIQPDGRTCV). The region spanning 560–610 (DVDECAMGECAGSDKVCVNTLGSFKCHSIDCPTNYIHDSLNKNQIADGYSC) is the EGF-like 9; calcium-binding domain. An N-linked (GlcNAc...) asparagine glycan is attached at N624.

The protein belongs to the fibulin family. As to quaternary structure, homomultimerizes and interacts with various extracellular matrix components. Expressed in head muscle cells, anterior and posterior intestinal cells. Isoform a: Expressed in male and hermaphrodite gonad, anterior and posterior intestine and pharyngeal basement membranes, body-wall muscle, GLR cells, uterine attachment and mechanosensory neurons. Isoform c: Expressed on ALM/PLM mechanosensory neuron attachments, in flexible tracks connecting the pharyngeal, body-wall-muscle basement membranes and in uterine attachments.

The protein localises to the secreted. Its subcellular location is the extracellular space. It localises to the extracellular matrix. The protein resides in the basement membrane. Its function is as follows. Incorporated into fibronectin-containing matrix fibers. Plays a role in cell adhesion and migration along protein fibers within the extracellular matrix (ECM). Important for certain developmental processes and contributes to the supramolecular organization of ECM architecture, in particular to those of basement membranes. Involved in regulating the shape and adhesion of cells in the developing pharynx, intestine, body-wall muscle and gonadal tissue. During gonadogenesis, regulates the width of gonads and the migration of distal tip cells (DTC). Together with type IV collagen let-2 and downstream of metalloprotease mig-17, recruits nidogen nid-1 to the gonad basement membrane thereby inducing basement membrane remodeling required for the directional migration of DTCs. Acts antagonistically with metalloprotease gon-1 to maintain optimal levels of type IV collagen emb-9 in the gonad basement membrane during gonadogenesis. Required for larval development. Functionally, involved in the assembly of the flexible hemicentin-containing tracks found joining the pharynx and body-wall-muscle basement membranes. This chain is Fibulin-1 (fbl-1), found in Caenorhabditis elegans.